The primary structure comprises 276 residues: Acetyl-coenzyme A carboxylase carboxyl transferase subunit beta (276 aa).

The region spanning 24 to 276 is the CoA carboxyltransferase N-terminal domain; it reads LWRECSNCHE…NNLLNLHSDK (253 aa). The Zn(2+) site is built by cysteine 28, cysteine 31, cysteine 46, and cysteine 49. A C4-type zinc finger spans residues 28 to 49; it reads CSNCHEKFYYRRAGVYEVCPNC.

Belongs to the AccD/PCCB family. In terms of assembly, acetyl-CoA carboxylase is a heterohexamer composed of biotin carboxyl carrier protein (AccB), biotin carboxylase (AccC) and two subunits each of ACCase subunit alpha (AccA) and ACCase subunit beta (AccD). The cofactor is Zn(2+).

It localises to the cytoplasm. The enzyme catalyses N(6)-carboxybiotinyl-L-lysyl-[protein] + acetyl-CoA = N(6)-biotinyl-L-lysyl-[protein] + malonyl-CoA. It functions in the pathway lipid metabolism; malonyl-CoA biosynthesis; malonyl-CoA from acetyl-CoA: step 1/1. Its function is as follows. Component of the acetyl coenzyme A carboxylase (ACC) complex. Biotin carboxylase (BC) catalyzes the carboxylation of biotin on its carrier protein (BCCP) and then the CO(2) group is transferred by the transcarboxylase to acetyl-CoA to form malonyl-CoA. The sequence is that of Acetyl-coenzyme A carboxylase carboxyl transferase subunit beta from Pediococcus pentosaceus (strain ATCC 25745 / CCUG 21536 / LMG 10740 / 183-1w).